We begin with the raw amino-acid sequence, 683 residues long: MALSKRELDELKPWIEKTVKRVLGFSEPTVVTAALNCVGKGMDKKKAADHLKPFLDDSTLRFVDKLFEAVEEGRSSRHSKSSSDRSRKRELKEVFGDDSEISKESSGVKKRRIPRFEEVEEEPEVIPGPPSESPGMLTKLQIKQMMEAATRQIEERKKQLSFISPPTPQPKTPSSSQPERLPIGNTIQPSQAATFMNDAIEKARKAAELQARIQAQLALKPGLIGNANMVGLANLHAMGIAPPKVELKDQTKPTPLILDEQGRTVDATGKEIELTHRMPTLKANIRAVKREQFRQQLKEKPSEDMESNTFFDPRVSIAPSQRQRRTFKFHDKGKFEKIAQRLRTKAQLEKLQAEISQAARKTGIHTSTRLALIAPKKELKEGDIPEIEWWDSYIIPNGFDLTEENPKREDYFGITNLVEHPAQLNPPVDNDTPVTLGVYLTKKEQKKLRRQTRREAQKELQEKVRLGLMPPPEPKVRISNLMRVLGTEAVQDPTKVEAHVRAQMAKRQKAHEEANAARKLTAEQRKVKKIKKLKEDISQGVHISVYRVRNLSNPAKKFKIEANAGQLYLTGVVVLHKDVNVVVVEGGPKAQKKFKRLMLHRIKWDEQTSNTKGDDDEESDEEAVKKTNKCVLVWEGTAKDRSFGEMKFKQCPTENMAREHFKKHGAEHYWDLALSESVLESTD.

Residues 1–87 enclose the PWI domain; that stretch reads MALSKRELDE…HSKSSSDRSR (87 aa). Residues 73 to 107 are compositionally biased toward basic and acidic residues; it reads GRSSRHSKSSSDRSRKRELKEVFGDDSEISKESSG. The disordered stretch occupies residues 73 to 135; the sequence is GRSSRHSKSS…IPGPPSESPG (63 aa). Residue K139 forms a Glycyl lysine isopeptide (Lys-Gly) (interchain with G-Cter in SUMO2) linkage. The tract at residues 153 to 183 is disordered; sequence IEERKKQLSFISPPTPQPKTPSSSQPERLPI. S164 is subject to Phosphoserine. T167 carries the post-translational modification Phosphothreonine. Residues K244 and K252 each participate in a glycyl lysine isopeptide (Lys-Gly) (interchain with G-Cter in SUMO2) cross-link. Residues 416 to 550 are mediates interaction with SART3; sequence NLVEHPAQLN…VHISVYRVRN (135 aa). S619 carries the post-translational modification Phosphoserine.

Component of the precatalytic spliceosome (spliceosome B complex). Component of the U4/U6-U5 tri-snRNP complex, a building block of the precatalytic spliceosome (spliceosome B complex). The U4/U6-U5 tri-snRNP complex is composed of the U4, U6 and U5 snRNAs and at least PRPF3, PRPF4, PRPF6, PRPF8, PRPF31, SNRNP200, TXNL4A, SNRNP40, SNRPB, SNRPD1, SNRPD2, SNRPD3, SNRPE, SNRPF, SNRPG, DDX23, CD2BP2, PPIH, SNU13, EFTUD2, SART1 and USP39, plus LSM2, LSM3, LSM4, LSM5, LSM6, LSM7 and LSM8. Interacts directly with PRPF4. Part of a heteromeric complex containing PPIH, PRPF3 and PRPF4 that is stable in the absence of RNA. Interacts with SART3; the interaction is direct and recruits the deubiquitinase USP4 to PRPF3. Interacts with PRPF19. Interacts ('Lys-63'-linked polyubiquitinated) with PRPF8 (via the MPN (JAB/Mov34) domain); may stabilize the U4/U6-U5 tri-snRNP complex. Interacts with ERCC6. Post-translationally, ubiquitinated. Undergoes 'Lys-63'-linked polyubiquitination by PRPF19 and deubiquitination by USP4. 'Lys-63'-linked ubiquitination increases the affinity for PRPF8 and may regulate the assembly of the U4/U6-U5 tri-snRNP complex.

Its subcellular location is the nucleus. It is found in the nucleus speckle. Functionally, plays a role in pre-mRNA splicing as component of the U4/U6-U5 tri-snRNP complex that is involved in spliceosome assembly, and as component of the precatalytic spliceosome (spliceosome B complex). This is U4/U6 small nuclear ribonucleoprotein Prp3 (PRPF3) from Pongo abelii (Sumatran orangutan).